The chain runs to 104 residues: NADH-quinone oxidoreductase subunit K (104 aa).

The next 3 helical transmembrane spans lie at 4–24 (VPLS…LYGA), 31–51 (VIVL…LVAF), and 64–84 (IFAL…LAIL).

Belongs to the complex I subunit 4L family. NDH-1 is composed of 14 different subunits. Subunits NuoA, H, J, K, L, M, N constitute the membrane sector of the complex.

The protein resides in the cell membrane. It catalyses the reaction a quinone + NADH + 5 H(+)(in) = a quinol + NAD(+) + 4 H(+)(out). NDH-1 shuttles electrons from NADH, via FMN and iron-sulfur (Fe-S) centers, to quinones in the respiratory chain. The immediate electron acceptor for the enzyme in this species is believed to be a menaquinone. Couples the redox reaction to proton translocation (for every two electrons transferred, four hydrogen ions are translocated across the cytoplasmic membrane), and thus conserves the redox energy in a proton gradient. This is NADH-quinone oxidoreductase subunit K from Geobacillus sp. (strain WCH70).